A 206-amino-acid chain; its full sequence is Small ribosomal subunit protein uS4 (206 aa).

The region spanning 98–176 (RRLDNVVYRL…APKWLEANRE (79 aa)) is the S4 RNA-binding domain.

This sequence belongs to the universal ribosomal protein uS4 family. As to quaternary structure, part of the 30S ribosomal subunit. Contacts protein S5. The interaction surface between S4 and S5 is involved in control of translational fidelity.

In terms of biological role, one of the primary rRNA binding proteins, it binds directly to 16S rRNA where it nucleates assembly of the body of the 30S subunit. Functionally, with S5 and S12 plays an important role in translational accuracy. This Gloeobacter violaceus (strain ATCC 29082 / PCC 7421) protein is Small ribosomal subunit protein uS4.